Here is a 287-residue protein sequence, read N- to C-terminus: Elongation factor Ts (287 aa).

Positions 80–83 (TDFL) are involved in Mg(2+) ion dislocation from EF-Tu.

Belongs to the EF-Ts family.

Its subcellular location is the cytoplasm. In terms of biological role, associates with the EF-Tu.GDP complex and induces the exchange of GDP to GTP. It remains bound to the aminoacyl-tRNA.EF-Tu.GTP complex up to the GTP hydrolysis stage on the ribosome. This is Elongation factor Ts from Pseudomonas putida (strain ATCC 47054 / DSM 6125 / CFBP 8728 / NCIMB 11950 / KT2440).